Consider the following 85-residue polypeptide: Large ribosomal subunit protein bL27 (85 aa).

A disordered region spans residues 1–21 (MAHKKAAGSSRNGRDSESKRL).

The protein belongs to the bacterial ribosomal protein bL27 family.

The chain is Large ribosomal subunit protein bL27 from Chromohalobacter salexigens (strain ATCC BAA-138 / DSM 3043 / CIP 106854 / NCIMB 13768 / 1H11).